Consider the following 683-residue polypeptide: Eukaryotic translation initiation factor 3 subunit B (683 aa).

The tract at residues 1 to 25 (MAKKKGEEQDFEEEPNFDDPEGFVD) is disordered. Positions 9 to 25 (QDFEEEPNFDDPEGFVD) are enriched in acidic residues. Positions 49-133 (NVIVVDNIPV…YTLLVNRFAD (85 aa)) constitute an RRM domain. 6 WD repeats span residues 199 to 238 (KRER…KVNK), 240 to 279 (AHSN…EKRT), 283 to 321 (DGMS…LLDM), 324 to 359 (IRVE…TLMA), 435 to 477 (EVKE…EPVL), and 522 to 567 (GDHY…KRVN). The stretch at 611 to 638 (MTRASKELIEKRAKLREQFTEYRSKRVK) forms a coiled coil.

It belongs to the eIF-3 subunit B family. In terms of assembly, component of the eukaryotic translation initiation factor 3 (eIF-3) complex.

It is found in the cytoplasm. In terms of biological role, RNA-binding component of the eukaryotic translation initiation factor 3 (eIF-3) complex, which is involved in protein synthesis of a specialized repertoire of mRNAs and, together with other initiation factors, stimulates binding of mRNA and methionyl-tRNAi to the 40S ribosome. The eIF-3 complex specifically targets and initiates translation of a subset of mRNAs involved in cell proliferation. This Anopheles gambiae (African malaria mosquito) protein is Eukaryotic translation initiation factor 3 subunit B.